Consider the following 257-residue polypeptide: Acetylglutamate kinase (257 aa).

Substrate-binding positions include 43 to 44, R65, and N157; that span reads GG.

The protein belongs to the acetylglutamate kinase family. ArgB subfamily.

The protein localises to the cytoplasm. The catalysed reaction is N-acetyl-L-glutamate + ATP = N-acetyl-L-glutamyl 5-phosphate + ADP. Its pathway is amino-acid biosynthesis; L-arginine biosynthesis; N(2)-acetyl-L-ornithine from L-glutamate: step 2/4. Functionally, catalyzes the ATP-dependent phosphorylation of N-acetyl-L-glutamate. In Mannheimia succiniciproducens (strain KCTC 0769BP / MBEL55E), this protein is Acetylglutamate kinase.